Consider the following 337-residue polypeptide: Large ribosomal subunit protein uL3 (337 aa).

Positions 1–26 (MGHAHAPRRGSLGYSPRVRARSQKPK) are disordered.

This sequence belongs to the universal ribosomal protein uL3 family. As to quaternary structure, part of the 50S ribosomal subunit. Forms a cluster with proteins L14 and L24e.

In terms of biological role, one of the primary rRNA binding proteins, it binds directly near the 3'-end of the 23S rRNA, where it nucleates assembly of the 50S subunit. This Methanocella arvoryzae (strain DSM 22066 / NBRC 105507 / MRE50) protein is Large ribosomal subunit protein uL3.